Reading from the N-terminus, the 79-residue chain is D-alanyl carrier protein (79 aa).

Residues 1-77 form the Carrier domain; the sequence is MDIKSEVIEI…KIIAGIVELQ (77 aa). Position 35 is an O-(pantetheine 4'-phosphoryl)serine (Ser35).

The protein belongs to the DltC family. In terms of processing, 4'-phosphopantetheine is transferred from CoA to a specific serine of apo-DCP.

Its subcellular location is the cytoplasm. The protein operates within cell wall biogenesis; lipoteichoic acid biosynthesis. Its function is as follows. Carrier protein involved in the D-alanylation of lipoteichoic acid (LTA). The loading of thioester-linked D-alanine onto DltC is catalyzed by D-alanine--D-alanyl carrier protein ligase DltA. The DltC-carried D-alanyl group is further transferred to cell membrane phosphatidylglycerol (PG) by forming an ester bond, probably catalyzed by DltD. D-alanylation of LTA plays an important role in modulating the properties of the cell wall in Gram-positive bacteria, influencing the net charge of the cell wall. This is D-alanyl carrier protein from Streptococcus pneumoniae serotype 2 (strain D39 / NCTC 7466).